The primary structure comprises 66 residues: UPF0337 protein SpyM3_0896 (66 aa).

This sequence belongs to the UPF0337 (CsbD) family.

In Streptococcus pyogenes serotype M3 (strain ATCC BAA-595 / MGAS315), this protein is UPF0337 protein SpyM3_0896.